The chain runs to 322 residues: Ribonucleoside-diphosphate reductase small subunit (322 aa).

Residues Asp70, Glu101, and His104 each contribute to the Fe cation site. Tyr108 is a catalytic residue. Residues Glu163, Glu197, and His200 each contribute to the Fe cation site.

It belongs to the ribonucleoside diphosphate reductase small chain family. Heterodimer of a large and a small subunit. The cofactor is Fe cation.

The enzyme catalyses a 2'-deoxyribonucleoside 5'-diphosphate + [thioredoxin]-disulfide + H2O = a ribonucleoside 5'-diphosphate + [thioredoxin]-dithiol. In terms of biological role, provides the precursors necessary for DNA synthesis. Catalyzes the biosynthesis of deoxyribonucleotides from the corresponding ribonucleotides. The sequence is that of Ribonucleoside-diphosphate reductase small subunit (RNR2) from Plasmodium falciparum (isolate FCR-3 / Gambia).